Reading from the N-terminus, the 491-residue chain is Neuronal acetylcholine receptor subunit beta-2 (491 aa).

The signal sequence occupies residues 1–18 (MALLRVLCLLAALRRSLC). Topologically, residues 19-226 (TDTEERLVEY…ITYDFIIRRK (208 aa)) are extracellular. Residues N44 and N161 are each glycosylated (N-linked (GlcNAc...) asparagine). C148 and C162 are joined by a disulfide. The helical transmembrane segment at 227–251 (PLFYTINLIIPCILITSLAILVFYL) threads the bilayer. The Cytoplasmic portion of the chain corresponds to 252 to 258 (PSDCGEK). The helical transmembrane segment at 259 to 277 (MTLCISVLLALTVFLLLIS) threads the bilayer. Residues 278–292 (KIVPPTSLDVPLVGK) lie on the Extracellular side of the membrane. Residues 293 to 314 (YLMFTMVLVTFSIVTSVCVLNV) form a helical membrane-spanning segment. The Cytoplasmic portion of the chain corresponds to 315–449 (HHRSPTTHTM…WKYVAMVIDR (135 aa)). A helical membrane pass occupies residues 450–468 (LFLWIFVFVCVFGTVGMFL).

This sequence belongs to the ligand-gated ion channel (TC 1.A.9) family. Acetylcholine receptor (TC 1.A.9.1) subfamily. Beta-2/CHRNB2 sub-subfamily. Neuronal AChR is a heteropentamer composed of two different types of subunits: alpha and beta. CHRNB2/Beta-2 subunit can be combined to CHRNA2/alpha-2, CHRNA3/alpha-3 or CHRNA4/alpha-4, CHRNA5/alpha-5, CHRNA6/alpha-6 and CHRNB3/beta-3 to give rise to functional receptors.

The protein resides in the synaptic cell membrane. Its subcellular location is the cell membrane. It catalyses the reaction Ca(2+)(in) = Ca(2+)(out). The catalysed reaction is K(+)(in) = K(+)(out). The enzyme catalyses Na(+)(in) = Na(+)(out). Activated by a myriad of ligands such as acetylcholine, cytisine, nicotine, choline and epibatidine. nAChR activity is inhibited by the antagonist alpha-conotoxins BuIA, PnIA, PnIC, GID and MII, small disulfide-constrained peptides from cone snails. Functionally, component of neuronal acetylcholine receptors (nAChRs) that function as pentameric, ligand-gated cation channels with high calcium permeability among other activities. nAChRs are excitatory neurotrasnmitter receptors formed by a collection of nAChR subunits known to mediate synaptic transmission in the nervous system and the neuromuscular junction. Each nAchR subunit confers differential attributes to channel properties, including activation, deactivation and desensitization kinetics, pH sensitivity, cation permeability, and binding to allosteric modulators. CHRNB2 forms heteropentameric neuronal acetylcholine receptors with CHRNA2, CHRNA3, CHRNA4 and CHRNA6, as well as CHRNA5 and CHRNB3 as accesory subunits. The protein is Neuronal acetylcholine receptor subunit beta-2 (CHRNB2) of Gallus gallus (Chicken).